The primary structure comprises 303 residues: Cysteine synthase B (303 aa).

Lys41 carries the post-translational modification N6-(pyridoxal phosphate)lysine. Pyridoxal 5'-phosphate contacts are provided by residues Asn71, 174-178 (GTTGT), and Ser255.

The protein belongs to the cysteine synthase/cystathionine beta-synthase family. Pyridoxal 5'-phosphate is required as a cofactor.

It catalyses the reaction O-acetyl-L-serine + hydrogen sulfide = L-cysteine + acetate. The protein operates within amino-acid biosynthesis; L-cysteine biosynthesis; L-cysteine from L-serine: step 2/2. Its function is as follows. Two cysteine synthase enzymes are found. Both catalyze the same reaction. Cysteine synthase B can also use thiosulfate in place of sulfide to give cysteine thiosulfonate as a product. This chain is Cysteine synthase B (cysM), found in Salmonella typhimurium (strain LT2 / SGSC1412 / ATCC 700720).